Consider the following 569-residue polypeptide: Probable santalene synthase (569 aa).

Arginine 284, aspartate 321, aspartate 325, arginine 460, and asparagine 463 together coordinate (2E)-geranyl diphosphate. Residues aspartate 321 and aspartate 325 each contribute to the Mg(2+) site. The DDXXD motif signature appears at 321–325; it reads DDAYD. Asparagine 463, threonine 467, and glutamate 471 together coordinate Mg(2+).

This sequence belongs to the terpene synthase family. Tpsb subfamily. It depends on Mg(2+) as a cofactor. Mn(2+) serves as cofactor.

Its function is as follows. Catalyzes the formation of santalene. This is Probable santalene synthase (SSY) from Santalum murrayanum (Bitter quandong).